A 206-amino-acid polypeptide reads, in one-letter code: Probable GTP-binding protein EngB (206 aa).

The 188-residue stretch at 8 to 195 (RDAEVVLVGR…EECLRTRFHE (188 aa)) folds into the EngB-type G domain. GTP is bound by residues 16 to 23 (GRSNVGKS), 41 to 45 (GVTRQ), 60 to 63 (DLPG), 140 to 143 (NKTD), and 175 to 177 (ICA). Positions 23 and 43 each coordinate Mg(2+).

Belongs to the TRAFAC class TrmE-Era-EngA-EngB-Septin-like GTPase superfamily. EngB GTPase family. The cofactor is Mg(2+).

Necessary for normal cell division and for the maintenance of normal septation. This Halorubrum lacusprofundi (strain ATCC 49239 / DSM 5036 / JCM 8891 / ACAM 34) protein is Probable GTP-binding protein EngB.